A 161-amino-acid chain; its full sequence is Allophycocyanin alpha chain (161 aa).

At Asn-71 the chain carries N4-methylasparagine. Cys-81 serves as a coordination point for (2R,3E)-phycocyanobilin.

It belongs to the phycobiliprotein family. As to quaternary structure, heterodimer of an alpha and a beta chain. Post-translationally, contains one covalently linked phycocyanobilin chromophore.

It localises to the cellular thylakoid membrane. Functionally, light-harvesting photosynthetic bile pigment-protein from the phycobiliprotein complex. Allophycocyanin has a maximum absorption at approximately 650 nanometers. In Synechocystis sp. (strain ATCC 27184 / PCC 6803 / Kazusa), this protein is Allophycocyanin alpha chain (apcA).